Here is a 363-residue protein sequence, read N- to C-terminus: tRNA/tmRNA (uracil-C(5))-methyltransferase (363 aa).

Residues Gln-187, Tyr-215, Asn-220, Glu-236, and Asp-296 each coordinate S-adenosyl-L-methionine. The active-site Nucleophile is the Cys-321. The active-site Proton acceptor is the Glu-355.

It belongs to the class I-like SAM-binding methyltransferase superfamily. RNA M5U methyltransferase family. TrmA subfamily.

The catalysed reaction is uridine(54) in tRNA + S-adenosyl-L-methionine = 5-methyluridine(54) in tRNA + S-adenosyl-L-homocysteine + H(+). The enzyme catalyses uridine(341) in tmRNA + S-adenosyl-L-methionine = 5-methyluridine(341) in tmRNA + S-adenosyl-L-homocysteine + H(+). Dual-specificity methyltransferase that catalyzes the formation of 5-methyluridine at position 54 (m5U54) in all tRNAs, and that of position 341 (m5U341) in tmRNA (transfer-mRNA). The chain is tRNA/tmRNA (uracil-C(5))-methyltransferase from Pseudomonas aeruginosa (strain ATCC 15692 / DSM 22644 / CIP 104116 / JCM 14847 / LMG 12228 / 1C / PRS 101 / PAO1).